Consider the following 230-residue polypeptide: Ribosomal RNA small subunit methyltransferase G (230 aa).

S-adenosyl-L-methionine-binding positions include G80, F85, 131-132 (VE), and R145.

It belongs to the methyltransferase superfamily. RNA methyltransferase RsmG family.

The protein localises to the cytoplasm. It catalyses the reaction guanosine(527) in 16S rRNA + S-adenosyl-L-methionine = N(7)-methylguanosine(527) in 16S rRNA + S-adenosyl-L-homocysteine. Functionally, specifically methylates the N7 position of guanine in position 527 of 16S rRNA. The polypeptide is Ribosomal RNA small subunit methyltransferase G (Novosphingobium aromaticivorans (strain ATCC 700278 / DSM 12444 / CCUG 56034 / CIP 105152 / NBRC 16084 / F199)).